A 155-amino-acid polypeptide reads, in one-letter code: SsrA-binding protein (155 aa).

It belongs to the SmpB family.

Its subcellular location is the cytoplasm. Functionally, required for rescue of stalled ribosomes mediated by trans-translation. Binds to transfer-messenger RNA (tmRNA), required for stable association of tmRNA with ribosomes. tmRNA and SmpB together mimic tRNA shape, replacing the anticodon stem-loop with SmpB. tmRNA is encoded by the ssrA gene; the 2 termini fold to resemble tRNA(Ala) and it encodes a 'tag peptide', a short internal open reading frame. During trans-translation Ala-aminoacylated tmRNA acts like a tRNA, entering the A-site of stalled ribosomes, displacing the stalled mRNA. The ribosome then switches to translate the ORF on the tmRNA; the nascent peptide is terminated with the 'tag peptide' encoded by the tmRNA and targeted for degradation. The ribosome is freed to recommence translation, which seems to be the essential function of trans-translation. This Geobacillus kaustophilus (strain HTA426) protein is SsrA-binding protein.